The sequence spans 338 residues: Tryptophan--tRNA ligase (338 aa).

ATP contacts are provided by residues Gln11–Ser13 and Gly19–Asn20. A 'HIGH' region motif is present at residues Pro12–Asn20. An L-tryptophan-binding site is contributed by Asp135. ATP is bound by residues Gly147 to Asp149, Val189, and Lys198 to Ser202. Positions Lys198 to Ser202 match the 'KMSKS' region motif.

This sequence belongs to the class-I aminoacyl-tRNA synthetase family. In terms of assembly, homodimer.

Its subcellular location is the cytoplasm. It catalyses the reaction tRNA(Trp) + L-tryptophan + ATP = L-tryptophyl-tRNA(Trp) + AMP + diphosphate + H(+). Its function is as follows. Catalyzes the attachment of tryptophan to tRNA(Trp). This Vibrio vulnificus (strain YJ016) protein is Tryptophan--tRNA ligase.